Reading from the N-terminus, the 594-residue chain is Acyl-coenzyme A thioesterase 11 (594 aa).

Residues 1-20 (MIQNVGNHLRRGFASMFSNR) constitute a mitochondrion transit peptide. Residues S15 and S25 each carry the phosphoserine modification. Positions 20–43 (RTSRKSISHPESGDPPTMAEGEGY) are disordered. The region spanning 45–157 (NPTEVQMSQL…LATFVAHREL (113 aa)) is the HotDog ACOT-type 1 domain. CoA contacts are provided by residues 93–95 (TAS), 122–124 (NSS), R183, and 272–274 (HFR). The HotDog ACOT-type 2 domain occupies 217–330 (EKTRVESVEL…FMTFVVLDKD (114 aa)). The START domain maps to 370 to 582 (KQAEVALSVP…FKACESFLLD (213 aa)).

The protein resides in the mitochondrion matrix. Its subcellular location is the cytoplasm. It catalyses the reaction hexadecanoyl-CoA + H2O = hexadecanoate + CoA + H(+). The catalysed reaction is tetradecanoyl-CoA + H2O = tetradecanoate + CoA + H(+). It carries out the reaction dodecanoyl-CoA + H2O = dodecanoate + CoA + H(+). The enzyme catalyses butanoyl-CoA + H2O = butanoate + CoA + H(+). It participates in lipid metabolism; fatty acid metabolism. Its function is as follows. Has an acyl-CoA thioesterase activity with a preference for the long chain fatty acyl-CoA thioesters hexadecanoyl-CoA/palmitoyl-CoA and tetradecanoyl-CoA/myristoyl-CoA which are the main substrates in the mitochondrial beta-oxidation pathway. The sequence is that of Acyl-coenzyme A thioesterase 11 (Acot11) from Mus musculus (Mouse).